Consider the following 447-residue polypeptide: Neuraminidase (447 aa).

At 1–6 (MNPNQK) the chain is on the intravirion side. Residues 7-27 (IITIGSICMGIGIISLILQIG) traverse the membrane as a helical segment. The involved in apical transport and lipid raft association stretch occupies residues 11-33 (GSICMGIGIISLILQIGNIISMW). Residues 28 to 447 (NIISMWVSHS…GAELPFTIDK (420 aa)) lie on the Virion surface side of the membrane. Positions 36–68 (HSIQTENQNHHEACNPSIAGQDAASVALAGNSS) are hypervariable stalk region. The N-linked (GlcNAc...) asparagine; by host glycan is linked to asparagine 66. Residues 69–447 (LCPISGWAIY…GAELPFTIDK (379 aa)) are head of neuraminidase. Cystine bridges form between cysteine 70–cysteine 395, cysteine 102–cysteine 107, cysteine 162–cysteine 209, cysteine 211–cysteine 216, cysteine 257–cysteine 270, cysteine 259–cysteine 268, cysteine 296–cysteine 313, and cysteine 399–cysteine 424. Substrate is bound at residue arginine 96. Asparagine 124 carries N-linked (GlcNAc...) asparagine; by host glycosylation. Aspartate 129 acts as the Proton donor/acceptor in catalysis. Arginine 130 contributes to the substrate binding site. Asparagine 213 carries an N-linked (GlcNAc...) asparagine; by host glycan. Substrate is bound at residue 255–256 (EE). Position 271 (arginine 271) interacts with substrate. Residues aspartate 272, glycine 276, and aspartate 302 each coordinate Ca(2+). Residue arginine 346 coordinates substrate. Tyrosine 380 functions as the Nucleophile in the catalytic mechanism.

The protein belongs to the glycosyl hydrolase 34 family. Homotetramer. Ca(2+) serves as cofactor. N-glycosylated.

The protein resides in the virion membrane. It localises to the host apical cell membrane. It carries out the reaction Hydrolysis of alpha-(2-&gt;3)-, alpha-(2-&gt;6)-, alpha-(2-&gt;8)- glycosidic linkages of terminal sialic acid residues in oligosaccharides, glycoproteins, glycolipids, colominic acid and synthetic substrates.. Inhibited by the neuraminidase inhibitors zanamivir (Relenza) and oseltamivir (Tamiflu). These drugs interfere with the release of progeny virus from infected cells and are effective against all influenza strains. Resistance to neuraminidase inhibitors is quite rare. In terms of biological role, catalyzes the removal of terminal sialic acid residues from viral and cellular glycoconjugates. Cleaves off the terminal sialic acids on the glycosylated HA during virus budding to facilitate virus release. Additionally helps virus spread through the circulation by further removing sialic acids from the cell surface. These cleavages prevent self-aggregation and ensure the efficient spread of the progeny virus from cell to cell. Otherwise, infection would be limited to one round of replication. Described as a receptor-destroying enzyme because it cleaves a terminal sialic acid from the cellular receptors. May facilitate viral invasion of the upper airways by cleaving the sialic acid moieties on the mucin of the airway epithelial cells. Likely to plays a role in the budding process through its association with lipid rafts during intracellular transport. May additionally display a raft-association independent effect on budding. Plays a role in the determination of host range restriction on replication and virulence. Sialidase activity in late endosome/lysosome traffic seems to enhance virus replication. The protein is Neuraminidase of Aves.